The primary structure comprises 276 residues: Undecaprenyl-diphosphatase (276 aa).

A run of 7 helical transmembrane segments spans residues alanine 48–phenylalanine 68, leucine 92–glutamate 112, leucine 119–alanine 139, isoleucine 155–phenylalanine 175, alanine 196–valine 216, phenylalanine 229–leucine 249, and isoleucine 255–valine 275.

This sequence belongs to the UppP family.

It localises to the cell membrane. It carries out the reaction di-trans,octa-cis-undecaprenyl diphosphate + H2O = di-trans,octa-cis-undecaprenyl phosphate + phosphate + H(+). In terms of biological role, catalyzes the dephosphorylation of undecaprenyl diphosphate (UPP). Confers resistance to bacitracin. The protein is Undecaprenyl-diphosphatase of Bacillus velezensis (strain DSM 23117 / BGSC 10A6 / LMG 26770 / FZB42) (Bacillus amyloliquefaciens subsp. plantarum).